Reading from the N-terminus, the 410-residue chain is Secreted protein PRY1 (410 aa).

An N-terminal signal peptide occupies residues 1–20 (MKQNYILSIILCYLLANVHS). 3 disordered regions span residues 64 to 86 (PAPV…STPS), 102 to 132 (SDSD…SSSS), and 148 to 260 (SSSS…SSSS). Residues 148 to 179 (SSSSTPSSISQQQQQQQGSPASGSNSPNSAQP) show a composition bias toward low complexity. The span at 197–211 (SGLGSGFGSGFGSGS) shows a compositional bias: gly residues. The segment covering 212-260 (GSDSDSGSGLPSASSSTIIQQQPSSSNIGSSSTSSSSSSSSSSSSSSSS) has biased composition (low complexity). The SCP domain maps to 283 to 394 (LDAHNKYRAQ…NWGLYVVCEY (112 aa)).

Belongs to the CRISP family.

It is found in the secreted. In terms of biological role, secreted protein that acts as a virulence factor during infections. The sequence is that of Secreted protein PRY1 (PRY1) from Candida albicans (strain SC5314 / ATCC MYA-2876) (Yeast).